The sequence spans 94 residues: MKNQEESGWQAFLTLCSKMQKEKFLQDLFSLFLSFGERKDVASRYHIIRALLEGELTQREIAEKYGVSIAQITRGSNALKGSDPQFKEFLQKEI.

A DNA-binding region spans residues 58–81; sequence QREIAEKYGVSIAQITRGSNALKG.

The protein belongs to the TrpR family. In terms of assembly, homodimer.

Its subcellular location is the cytoplasm. Functionally, this protein is an aporepressor. When complexed with L-tryptophan it binds the operator region of the trp operon and prevents the initiation of transcription. In Chlamydia trachomatis serovar L2 (strain ATCC VR-902B / DSM 19102 / 434/Bu), this protein is Trp operon repressor homolog.